Here is a 500-residue protein sequence, read N- to C-terminus: Galactofuranose transporter ATP-binding protein YtfR (500 aa).

2 ABC transporter domains span residues 10-245 and 259-497; these read LRTE…LGRE and LSDK…IMNA. 42-49 contacts ATP; the sequence is GENGAGKS.

Belongs to the ABC transporter superfamily. As to quaternary structure, the complex is composed of two ATP-binding proteins (YtfR), two transmembrane proteins (YtfT and YjfF) and a solute-binding protein (YtfQ).

Its subcellular location is the cell inner membrane. The enzyme catalyses D-galactofuranose(out) + ATP + H2O = D-galactofuranose(in) + ADP + phosphate + H(+). In terms of biological role, part of the ABC transporter complex YtfQRT-YjfF involved in galactofuranose transport. Responsible for energy coupling to the transport system. The protein is Galactofuranose transporter ATP-binding protein YtfR (ytfR) of Escherichia coli O157:H7.